The primary structure comprises 224 residues: MIPFTSGKCYDRFPSMLFTYRVVIGRSFCQAHRGSLMAENRSKGAKNAIKVVHESSLTSKEQREKSKDDETPAWKIQKMAISKKLKGQRWNPSKRLSREEMEGLRLIKSQFPHLNASELGQQFKVSPEVVKRILSSKWRPTEDELGKLQDRWKQRGERIKQMFDSHQIQEKPLVVPKRIVINTLGSSPSVVATTRPSKNAKSNKRTKNKLHLLQQREHDHEHSE.

A mitochondrion-targeting transit peptide spans 1 to 42 (MIPFTSGKCYDRFPSMLFTYRVVIGRSFCQAHRGSLMAENRS). Disordered regions lie at residues 53-72 (HESSLTSKEQREKSKDDETP) and 186-224 (SSPSVVATTRPSKNAKSNKRTKNKLHLLQQREHDHEHSE). The span at 60–72 (KEQREKSKDDETP) shows a compositional bias: basic and acidic residues. Residues 186–200 (SSPSVVATTRPSKNA) show a composition bias toward polar residues. Residues 201–210 (KSNKRTKNKL) show a composition bias toward basic residues. Over residues 214-224 (QQREHDHEHSE) the composition is skewed to basic and acidic residues.

This sequence belongs to the RRG9 family.

The protein resides in the mitochondrion. In terms of biological role, required for respiratory activity and maintenance and expression of the mitochondrial genome. The chain is Required for respiratory growth protein 9, mitochondrial (RRG9) from Zygosaccharomyces rouxii (strain ATCC 2623 / CBS 732 / NBRC 1130 / NCYC 568 / NRRL Y-229).